We begin with the raw amino-acid sequence, 36 residues long: Dermonecrotic toxin LgSicTox-beta-LOXN1/LOXN7 (36 aa).

It belongs to the arthropod phospholipase D family. Class II subfamily. The cofactor is Mg(2+). In terms of processing, contains 2 disulfide bonds. As to expression, expressed by the venom gland.

Its subcellular location is the secreted. It catalyses the reaction an N-(acyl)-sphingosylphosphocholine = an N-(acyl)-sphingosyl-1,3-cyclic phosphate + choline. It carries out the reaction an N-(acyl)-sphingosylphosphoethanolamine = an N-(acyl)-sphingosyl-1,3-cyclic phosphate + ethanolamine. The enzyme catalyses a 1-acyl-sn-glycero-3-phosphocholine = a 1-acyl-sn-glycero-2,3-cyclic phosphate + choline. The catalysed reaction is a 1-acyl-sn-glycero-3-phosphoethanolamine = a 1-acyl-sn-glycero-2,3-cyclic phosphate + ethanolamine. Functionally, dermonecrotic toxins cleave the phosphodiester linkage between the phosphate and headgroup of certain phospholipids (sphingolipid and lysolipid substrates), forming an alcohol (often choline) and a cyclic phosphate. This toxin acts on sphingomyelin (SM). It may also act on ceramide phosphoethanolamine (CPE), lysophosphatidylcholine (LPC) and lysophosphatidylethanolamine (LPE), but not on lysophosphatidylserine (LPS), and lysophosphatidylglycerol (LPG). It acts by transphosphatidylation, releasing exclusively cyclic phosphate products as second products. Induces dermonecrosis, hemolysis, increased vascular permeability, edema, inflammatory response, and platelet aggregation. The polypeptide is Dermonecrotic toxin LgSicTox-beta-LOXN1/LOXN7 (Loxosceles gaucho (Spider)).